Here is a 91-residue protein sequence, read N- to C-terminus: Small ribosomal subunit protein uS19 (91 aa).

It belongs to the universal ribosomal protein uS19 family.

Its function is as follows. Protein S19 forms a complex with S13 that binds strongly to the 16S ribosomal RNA. The polypeptide is Small ribosomal subunit protein uS19 (Prochlorococcus marinus (strain NATL1A)).